A 338-amino-acid polypeptide reads, in one-letter code: Methionine import ATP-binding protein MetN 2 (338 aa).

Positions 2–242 (IQLEGVSVDF…PQHAFTRQLV (241 aa)) constitute an ABC transporter domain. 39-46 (GTSGAGKS) contacts ATP.

This sequence belongs to the ABC transporter superfamily. Methionine importer (TC 3.A.1.24) family. As to quaternary structure, the complex is composed of two ATP-binding proteins (MetN), two transmembrane proteins (MetI) and a solute-binding protein (MetQ).

Its subcellular location is the cell inner membrane. The catalysed reaction is L-methionine(out) + ATP + H2O = L-methionine(in) + ADP + phosphate + H(+). It catalyses the reaction D-methionine(out) + ATP + H2O = D-methionine(in) + ADP + phosphate + H(+). Functionally, part of the ABC transporter complex MetNIQ involved in methionine import. Responsible for energy coupling to the transport system. The chain is Methionine import ATP-binding protein MetN 2 from Pectobacterium atrosepticum (strain SCRI 1043 / ATCC BAA-672) (Erwinia carotovora subsp. atroseptica).